Consider the following 1996-residue polypeptide: Non-reducing polyketide synthase atnG (1996 aa).

Residues 9-245 (FLFGDQADAP…AELPAFGAVH (237 aa)) are N-terminal acylcarrier protein transacylase (SAT) domain. The Ketosynthase family 3 (KS3) domain occupies 366–794 (SGSVAVIGMS…GGNSCFVLEE (429 aa)). Active-site for beta-ketoacyl synthase activity residues include Cys538, His673, and His713. The interval 891–1150 (AFAFTGQGAH…VKYTQAISHC (260 aa)) is malonyl-CoA:ACP transacylase (MAT) domain. Residue Ser982 is the For acyl/malonyl transferase activity of the active site. The interval 1263-1392 (HHLVSQDDNG…CCIRQTDEQD (130 aa)) is N-terminal hotdog fold. One can recognise a PKS/mFAS DH domain in the interval 1263 to 1569 (HHLVSQDDNG…FRKMPRTTLH (307 aa)). A product template (PT) domain region spans residues 1267 to 1568 (SQDDNGKEQS…RFRKMPRTTL (302 aa)). His1295 acts as the Proton acceptor; for dehydratase activity in catalysis. Positions 1416–1569 (ASGIANRFQG…FRKMPRTTLH (154 aa)) are C-terminal hotdog fold. Catalysis depends on Asp1481, which acts as the Proton donor; for dehydratase activity. The segment at 1573–1621 (GKAVPPKPAKETSHPSVEATAPATTNGRSSATNAQAEAPAPPVNGSNGH) is disordered. The segment covering 1594–1607 (PATTNGRSSATNAQ) has biased composition (polar residues). The 78-residue stretch at 1620–1697 (GHRKTVESVL…DAQRQLRTLE (78 aa)) folds into the Carrier domain. Ser1657 carries the post-translational modification O-(pantetheine 4'-phosphoryl)serine. A thioesterase (TE) domain region spans residues 1725 to 1923 (KRECNVVLMQ…ERTFVVWAKK (199 aa)).

The protein operates within secondary metabolite biosynthesis; terpenoid biosynthesis. Its function is as follows. Non-reducing polyketide synthase; part of the gene cluster that mediates the biosynthesis of the meroterpenoids arthripenoids. The pathway begins with the HR-PKS atnH that catalyzes two chain-extension steps to form a reduced triketide, which then primes the SAT domain in the NR-PKS atnG to initiate three more cycles of extension to give a linear hexaketide corresponding to the polyketide part of arthripenoids. The FAD-dependent monooxygenase atnJ then performs an oxidative decarboxylation at C11 of the atnH/atnG product, via an electrophilic aromatic hydroxylation with concomitant ipso-decarboxylation. The membrane-bound polyprenyl transferase atnF then introduces a farnesyl group before the FAD-dependent monooxygenase atnK functions as the first epoxidase on terminal C12'-C13' olefin, followed by a second epoxidation on C7'-C8' catalyzed by atnA. The terpene cyclase/mutase atnI then initiates the sequential tricyclic ring formation through protonation of the terminal epoxide and catalyzes the regioselective and stereoselective 6/6/6-tricyclic ring formation. The cytochrome P450 monooxygenase atnM is responsible for hydroxylating both C1' and C10'. The next steps may involve ketoreduction and acetyl transfer by the ketoreductase atnB and the acetyltransferase atnC, and lead to the production of arthripenoid B, the final biosynthetic product of the atn cluster. The hydroquinone moiety in arthripenoid B is prone to undergo spontaneous oxidation to afford a benzoquinone compound, a key intermediate for generating structure diversity. For instance, addition of a cysteine followed by ring contraction gives arthripenoid A, tautomerization gives the main product arthripenoid C, addition of a molecular of water or amine affords arthripenoid D or E, respectively, and loss of one water forms arthripenoid F. The sequence is that of Non-reducing polyketide synthase atnG from Arthrinium sp.